We begin with the raw amino-acid sequence, 437 residues long: Four-jointed box protein 1 (437 aa).

A signal peptide spans 1–24 (MGRRMRGAAATAGLWLLALGSLLA). 2 disordered regions span residues 33 to 66 (RTELPASRPPEDRLPRRPARSGGPAPAPRFPLPP) and 88 to 116 (AGADGPPRQSRSEPRWHVSARQPRPEESA). Residues 57-66 (APAPRFPLPP) show a composition bias toward pro residues. Asn-248 carries N-linked (GlcNAc...) asparagine glycosylation.

It belongs to the FJX1/FJ family. In terms of processing, glycosylated. Post-translationally, undergoes proteolytic cleavage.

It is found in the secreted. Its function is as follows. Acts as an inhibitor of dendrite extension and branching. The chain is Four-jointed box protein 1 (FJX1) from Homo sapiens (Human).